Here is a 208-residue protein sequence, read N- to C-terminus: uncharacterized protein (208 aa).

Positions D4–S71 constitute a J domain. Positions Y67 to S100 are disordered. The span at A72–N87 shows a compositional bias: polar residues. A compositionally biased stretch (low complexity) spans P88–S100. The helical transmembrane segment at G127–I147 threads the bilayer.

The protein belongs to the DnaJ family.

The protein localises to the endoplasmic reticulum membrane. This is an uncharacterized protein from Schizosaccharomyces pombe (strain 972 / ATCC 24843) (Fission yeast).